Consider the following 187-residue polypeptide: Large ribosomal subunit protein eL18A (187 aa).

Phosphoserine occurs at positions 16 and 64. Phosphothreonine is present on residues Thr87, Thr89, and Thr134. Residue Ser136 is modified to Phosphoserine. Residue Thr138 is modified to Phosphothreonine.

It belongs to the eukaryotic ribosomal protein eL18 family. As to quaternary structure, component of the large ribosomal subunit (LSU). Mature yeast ribosomes consist of a small (40S) and a large (60S) subunit. The 40S small subunit contains 1 molecule of ribosomal RNA (18S rRNA) and at least 33 different proteins. The large 60S subunit contains 3 rRNA molecules (25S, 5.8S and 5S rRNA) and at least 46 different proteins. eL18 interacts with NAP1.

It is found in the cytoplasm. Its function is as follows. Component of the ribosome, a large ribonucleoprotein complex responsible for the synthesis of proteins in the cell. The small ribosomal subunit (SSU) binds messenger RNAs (mRNAs) and translates the encoded message by selecting cognate aminoacyl-transfer RNA (tRNA) molecules. The large subunit (LSU) contains the ribosomal catalytic site termed the peptidyl transferase center (PTC), which catalyzes the formation of peptide bonds, thereby polymerizing the amino acids delivered by tRNAs into a polypeptide chain. The nascent polypeptides leave the ribosome through a tunnel in the LSU and interact with protein factors that function in enzymatic processing, targeting, and the membrane insertion of nascent chains at the exit of the ribosomal tunnel. This chain is Large ribosomal subunit protein eL18A (rpl1801), found in Schizosaccharomyces pombe (strain 972 / ATCC 24843) (Fission yeast).